The following is a 1392-amino-acid chain: DNA-directed RNA polymerase subunit beta'' (1392 aa).

Residues Cys-224, Cys-295, Cys-302, and Cys-305 each contribute to the Zn(2+) site.

The protein belongs to the RNA polymerase beta' chain family. RpoC2 subfamily. As to quaternary structure, in plastids the minimal PEP RNA polymerase catalytic core is composed of four subunits: alpha, beta, beta', and beta''. When a (nuclear-encoded) sigma factor is associated with the core the holoenzyme is formed, which can initiate transcription. Zn(2+) is required as a cofactor.

Its subcellular location is the plastid. The protein resides in the chloroplast. The enzyme catalyses RNA(n) + a ribonucleoside 5'-triphosphate = RNA(n+1) + diphosphate. In terms of biological role, DNA-dependent RNA polymerase catalyzes the transcription of DNA into RNA using the four ribonucleoside triphosphates as substrates. This is DNA-directed RNA polymerase subunit beta'' from Solanum tuberosum (Potato).